The primary structure comprises 401 residues: MSKEKIAVAYSGGLDTSVMIKWLKDKYEGAEIVAVTGNLGQKMEVDNLEQKAIATGAKSFHFVDLRKTFVEEYIWKALKAGALYEDVYPLATALGRPLLAKALVDVALAEGCTMLTHGCTGKGNDQVRFEVAFAALAPHMKVVAPLREWEFTSREQEIAYAMEHNIPVSATKKNPYSIDENIWGISIECGVLEDPMVAPPADAYQITTAPELAPDEPTVVDIEFAQGVPVALDGQQMEGLDLIVRLNELGAMNGVGRLDMIENRVVGIKSREIYEAPAATILHFAHRELERLTLEKSVFQYKRNIGQDYANLIYNGTWFSPMRKALDAFVDETQKPVTGMVRIKLYKGSMTLLGRTSPNSLYNEALATYTEADTFDHKSAEGFIKIYGLGLKTFHEVNKSE.

Position 9-17 (9-17 (AYSGGLDTS)) interacts with ATP. Tyrosine 88 contacts L-citrulline. Glycine 118 lines the ATP pocket. L-aspartate contacts are provided by threonine 120, asparagine 124, and aspartate 125. Asparagine 124 lines the L-citrulline pocket. Positions 128, 177, 186, 262, and 274 each coordinate L-citrulline.

It belongs to the argininosuccinate synthase family. Type 1 subfamily. In terms of assembly, homotetramer.

It is found in the cytoplasm. It catalyses the reaction L-citrulline + L-aspartate + ATP = 2-(N(omega)-L-arginino)succinate + AMP + diphosphate + H(+). It participates in amino-acid biosynthesis; L-arginine biosynthesis; L-arginine from L-ornithine and carbamoyl phosphate: step 2/3. This chain is Argininosuccinate synthase, found in Chlorobaculum tepidum (strain ATCC 49652 / DSM 12025 / NBRC 103806 / TLS) (Chlorobium tepidum).